The following is a 1459-amino-acid chain: DNA-binding protein RFX7 (1459 aa).

Positions 1–27 (MAEEQQQPPPQQLDAPQQLPLSAPNPG) are disordered. Residues 12-21 (QLDAPQQLPL) are compositionally biased toward low complexity. The RFX-type winged-helix DNA-binding region spans 108-183 (AFSWIRNTLE…YCYSGLRKKA (76 aa)). A PxLPxI/L motif; mediates interaction with ANKRA2 and RFXANK motif is present at residues 188–193 (PTLPNL). Disordered regions lie at residues 303-347 (AKQQ…LPNG), 404-428 (SVKQTPKTPQNVPASPGGDRSARHR), 482-590 (PSNS…GVTE), 634-659 (FTSTSSPSNGDSVNKDPKICTKSPRK), 688-716 (GQKPGTVKKDQKVPHSGKTESSTAGAQIP), and 918-1016 (SVTP…VPPS). 2 stretches are compositionally biased toward polar residues: residues 404–416 (SVKQTPKTPQNVP) and 482–502 (PSNSNAPLKHSASVSSATGTT). Residues 521 to 534 (SPGSRASSTGGTSA) are compositionally biased toward low complexity. A compositionally biased stretch (basic and acidic residues) spans 537–549 (VKMEPEGSSDEHP). Polar residues-rich tracts occupy residues 562–578 (PLTTSSALWGQKSNTDG), 634–645 (FTSTSSPSNGDS), and 706–716 (TESSTAGAQIP). The span at 947 to 963 (TPTPTPTPTPTPTPTPT) shows a compositional bias: pro residues. A compositionally biased stretch (polar residues) spans 971–1009 (GSQSLSRESPCSRLAQTTPVDSALGSSRHTPIGTPHSNC).

This sequence belongs to the RFX family. In terms of assembly, interacts (via PxLPxI/L motif) with RFXANK (via ankyrin repeats). Interacts (via PxLPxI/L motif) with ANKRA2 (via ankyrin repeats). As to expression, expressed in spleen and lymph node and to a lower extend in brain (at protein level). Expressed in lymphoid organs and lymphoid cell subsets. Expressed throughout natural killer (NK) cell maturation.

The protein localises to the nucleus. In terms of biological role, transcription factor. Acts as a transcriptional activator by binding to promoter regions of target genes, such as Rec8, Mxd4 and Ddit4. Plays a role in natural killer (NK) cell maintenance and immunity. May play a role in the process of ciliogenesis in the neural tube and neural tube closure. This is DNA-binding protein RFX7 from Mus musculus (Mouse).